Consider the following 80-residue polypeptide: Exodeoxyribonuclease 7 small subunit (80 aa).

Belongs to the XseB family. Heterooligomer composed of large and small subunits.

It localises to the cytoplasm. The enzyme catalyses Exonucleolytic cleavage in either 5'- to 3'- or 3'- to 5'-direction to yield nucleoside 5'-phosphates.. Bidirectionally degrades single-stranded DNA into large acid-insoluble oligonucleotides, which are then degraded further into small acid-soluble oligonucleotides. The protein is Exodeoxyribonuclease 7 small subunit of Pseudomonas entomophila (strain L48).